The following is a 189-amino-acid chain: Elongation factor P 2 (189 aa).

The protein belongs to the elongation factor P family.

The protein resides in the cytoplasm. It functions in the pathway protein biosynthesis; polypeptide chain elongation. Its function is as follows. Involved in peptide bond synthesis. Stimulates efficient translation and peptide-bond synthesis on native or reconstituted 70S ribosomes in vitro. Probably functions indirectly by altering the affinity of the ribosome for aminoacyl-tRNA, thus increasing their reactivity as acceptors for peptidyl transferase. This is Elongation factor P 2 from Lactobacillus acidophilus (strain ATCC 700396 / NCK56 / N2 / NCFM).